The sequence spans 79 residues: UPF0349 protein GTNG_2908 (79 aa).

It belongs to the UPF0349 family.

The polypeptide is UPF0349 protein GTNG_2908 (Geobacillus thermodenitrificans (strain NG80-2)).